Here is a 272-residue protein sequence, read N- to C-terminus: Putative phosphoenolpyruvate synthase regulatory protein (272 aa).

Gly152–Thr159 serves as a coordination point for ADP.

This sequence belongs to the pyruvate, phosphate/water dikinase regulatory protein family. PSRP subfamily.

It catalyses the reaction [pyruvate, water dikinase] + ADP = [pyruvate, water dikinase]-phosphate + AMP + H(+). The enzyme catalyses [pyruvate, water dikinase]-phosphate + phosphate + H(+) = [pyruvate, water dikinase] + diphosphate. In terms of biological role, bifunctional serine/threonine kinase and phosphorylase involved in the regulation of the phosphoenolpyruvate synthase (PEPS) by catalyzing its phosphorylation/dephosphorylation. This chain is Putative phosphoenolpyruvate synthase regulatory protein, found in Methylibium petroleiphilum (strain ATCC BAA-1232 / LMG 22953 / PM1).